Reading from the N-terminus, the 468-residue chain is 3-isopropylmalate dehydratase large subunit (468 aa).

[4Fe-4S] cluster-binding residues include Cys-347, Cys-407, and Cys-410.

It belongs to the aconitase/IPM isomerase family. LeuC type 1 subfamily. As to quaternary structure, heterodimer of LeuC and LeuD. [4Fe-4S] cluster is required as a cofactor.

It carries out the reaction (2R,3S)-3-isopropylmalate = (2S)-2-isopropylmalate. The protein operates within amino-acid biosynthesis; L-leucine biosynthesis; L-leucine from 3-methyl-2-oxobutanoate: step 2/4. Functionally, catalyzes the isomerization between 2-isopropylmalate and 3-isopropylmalate, via the formation of 2-isopropylmaleate. The sequence is that of 3-isopropylmalate dehydratase large subunit from Prochlorococcus marinus (strain SARG / CCMP1375 / SS120).